Reading from the N-terminus, the 270-residue chain is MAAPGEALTSSGYIAHHLSNLSLYKLGLVGSETSFWNVHIDSLFFSWFTGLIFLGIFYKVAKRTTAGVPGKLQCAVEMIVEFVADNVKDTFHGRNPLIAPLALTIFCWVFLMNVMDLVPIDFLPYPAEHWLGIPYLKVVPSADVNITMAMALGVFALMIYYSIKVKGLGGFAKELALHPFNHPLMIPFNLLIEVVSLLAKPLSLGMRLFGNMFAGEVVFILCAAMLPWYLQWMGSLPWAIFHILVITIQAFVFMMLTIVYLSMAHEDSDH.

Transmembrane regions (helical) follow at residues 38–58 (VHID…GIFY), 98–118 (IAPL…MDLV), 143–163 (DVNI…YYSI), 208–228 (LFGN…MLPW), and 239–259 (AIFH…LTIV).

It belongs to the ATPase A chain family. As to quaternary structure, F-type ATPases have 2 components, CF(1) - the catalytic core - and CF(0) - the membrane proton channel. CF(1) has five subunits: alpha(3), beta(3), gamma(1), delta(1), epsilon(1). CF(0) has three main subunits: a(1), b(2) and c(9-12). The alpha and beta chains form an alternating ring which encloses part of the gamma chain. CF(1) is attached to CF(0) by a central stalk formed by the gamma and epsilon chains, while a peripheral stalk is formed by the delta and b chains.

Its subcellular location is the cell inner membrane. Functionally, key component of the proton channel; it plays a direct role in the translocation of protons across the membrane. The polypeptide is ATP synthase subunit a (Vibrio parahaemolyticus serotype O3:K6 (strain RIMD 2210633)).